The following is a 472-amino-acid chain: tRNA-2-methylthio-N(6)-dimethylallyladenosine synthase (472 aa).

In terms of domain architecture, MTTase N-terminal spans 22-138 (RSYWITTFGC…LETLLQQVDS (117 aa)). [4Fe-4S] cluster contacts are provided by Cys-31, Cys-67, Cys-101, Cys-173, Cys-177, and Cys-180. Positions 159–396 (RDSAICGWVN…NALVERNARE (238 aa)) constitute a Radical SAM core domain. The TRAM domain maps to 399–467 (IRYQGRTEEV…SFSLSGTPLP (69 aa)).

It belongs to the methylthiotransferase family. MiaB subfamily. Monomer. The cofactor is [4Fe-4S] cluster.

The protein localises to the cytoplasm. It carries out the reaction N(6)-dimethylallyladenosine(37) in tRNA + (sulfur carrier)-SH + AH2 + 2 S-adenosyl-L-methionine = 2-methylsulfanyl-N(6)-dimethylallyladenosine(37) in tRNA + (sulfur carrier)-H + 5'-deoxyadenosine + L-methionine + A + S-adenosyl-L-homocysteine + 2 H(+). In terms of biological role, catalyzes the methylthiolation of N6-(dimethylallyl)adenosine (i(6)A), leading to the formation of 2-methylthio-N6-(dimethylallyl)adenosine (ms(2)i(6)A) at position 37 in tRNAs that read codons beginning with uridine. The sequence is that of tRNA-2-methylthio-N(6)-dimethylallyladenosine synthase from Synechococcus sp. (strain CC9902).